The primary structure comprises 562 residues: Furostanol glycoside 26-O-beta-glucosidase (562 aa).

The N-terminal 44 residues, 1-44 (MAAQLGLPLVSCHRGASQAASSSAHLVPGASAIMQAGNRRQKMR), are a transit peptide targeting the chloroplast. A beta-D-glucoside contacts are provided by residues glutamine 110, histidine 214, and 259-260 (NE). The active-site Proton donor is the glutamate 260. A disulfide bridge links cysteine 279 with cysteine 285. Residues tyrosine 401, glutamate 472, tryptophan 518, 525-526 (EW), and phenylalanine 534 each bind a beta-D-glucoside. Glutamate 472 acts as the Nucleophile in catalysis.

It belongs to the glycosyl hydrolase 1 family. As to quaternary structure, heterodimer. The N-terminus of the larger subunit is blocked and the smaller subunit might be derived from the larger one.

Its subcellular location is the plastid. It is found in the chloroplast. The enzyme catalyses protodioscin + H2O = 26-deglucoprotodioscin + D-glucose. With respect to regulation, partially inhibited by glucono-1,5-lactone, conduritol beta-epoxide and diosgenin, but not by beta-sitosterol or cholesterol. Functionally, beta-glucosidase involved in saponin metabolism. Highly specific for the cleavage of C-26-bound glucose moiety of furostanol glycosides such as protogracillin and protodioscin. No activity with nuatigenin glycoside. Convers furostanol glycosides to spirostanol glycosides. This Hellenia speciosa (Crepe ginger) protein is Furostanol glycoside 26-O-beta-glucosidase.